A 305-amino-acid chain; its full sequence is Cytochrome c biogenesis protein CcsA (305 aa).

The next 8 helical transmembrane spans lie at 11–31 (GLGF…FWAV), 37–57 (TGIV…QLVL), 63–83 (GHFP…ACTL), 96–116 (IVAA…SFAL), 141–161 (VIMV…AVLL), 212–232 (TITV…VWAN), 246–263 (TWAL…HTRL), and 275–295 (VAVV…LLGI).

The protein belongs to the CcmF/CycK/Ccl1/NrfE/CcsA family. In terms of assembly, may interact with ccs1.

Its subcellular location is the cellular thylakoid membrane. Functionally, required during biogenesis of c-type cytochromes (cytochrome c6 and cytochrome f) at the step of heme attachment. This Parasynechococcus marenigrum (strain WH8102) protein is Cytochrome c biogenesis protein CcsA.